Reading from the N-terminus, the 364-residue chain is DNA polymerase IV (364 aa).

In terms of domain architecture, UmuC spans Ile-7 to Gly-187. Positions 11 and 105 each coordinate Mg(2+). The active site involves Glu-106.

The protein belongs to the DNA polymerase type-Y family. Monomer. The cofactor is Mg(2+).

The protein resides in the cytoplasm. The enzyme catalyses DNA(n) + a 2'-deoxyribonucleoside 5'-triphosphate = DNA(n+1) + diphosphate. Its function is as follows. Poorly processive, error-prone DNA polymerase involved in untargeted mutagenesis. Copies undamaged DNA at stalled replication forks, which arise in vivo from mismatched or misaligned primer ends. These misaligned primers can be extended by PolIV. Exhibits no 3'-5' exonuclease (proofreading) activity. May be involved in translesional synthesis, in conjunction with the beta clamp from PolIII. This is DNA polymerase IV from Stenotrophomonas maltophilia (strain K279a).